The chain runs to 278 residues: Undecaprenyl-diphosphatase 1 (278 aa).

The next 5 membrane-spanning stretches (helical) occupy residues 85–105 (LNVIIATIPAIVLGLLFEKTI), 108–128 (ALFSPVPVAFALVAGGVVILW), 188–208 (VATEFSFFLAIPIIFGATAYE), 218–238 (VDALGTFALGFVAAFVSAFAC), and 254–274 (FAWYRIGFGLLILLVGYSGAL).

This sequence belongs to the UppP family.

It is found in the cell inner membrane. The enzyme catalyses di-trans,octa-cis-undecaprenyl diphosphate + H2O = di-trans,octa-cis-undecaprenyl phosphate + phosphate + H(+). Its function is as follows. Catalyzes the dephosphorylation of undecaprenyl diphosphate (UPP). Confers resistance to bacitracin. The chain is Undecaprenyl-diphosphatase 1 from Paraburkholderia xenovorans (strain LB400).